We begin with the raw amino-acid sequence, 305 residues long: Superkiller complex protein 8 (305 aa).

WD repeat units lie at residues 14 to 57, 62 to 101, 104 to 143, 146 to 187, 188 to 227, 230 to 269, and 272 to 305; these read AHED…LELQ, GHQL…QIRA, AGPV…KEYS, TRGK…HTLE, GHAM…LAAT, GHGS…CVHT, and DHQD…DCPI.

The protein belongs to the SKI8 family. Component of the PAF1 complex. Component of the SKI complex.

Its subcellular location is the nucleus. It localises to the cytoplasm. Its function is as follows. Component of the PAF1 complex (PAF1C) which has multiple functions during transcription by RNA polymerase II and is implicated in regulation of development and maintenance of embryonic stem cell pluripotency. PAF1C associates with RNA polymerase II through interaction with POLR2A CTD non-phosphorylated and 'Ser-2'- and 'Ser-5'-phosphorylated forms and is involved in transcriptional elongation, acting both independently and synergistically with TCEA1 and in cooperation with the DSIF complex and HTATSF1. Also acts as a component of the SKI complex, a multiprotein complex that assists the RNA-degrading exosome during the mRNA decay and quality-control pathways. The SKI complex catalyzes mRNA extraction from 80S ribosomal complexes in the 3'-5' direction and channels mRNA to the cytosolic exosome for degradation. The polypeptide is Superkiller complex protein 8 (skic8) (Xenopus tropicalis (Western clawed frog)).